A 472-amino-acid chain; its full sequence is N-succinylglutamate 5-semialdehyde dehydrogenase 1 (472 aa).

209–214 is an NAD(+) binding site; it reads GGVQAG. Residues glutamate 232 and cysteine 266 contribute to the active site.

This sequence belongs to the aldehyde dehydrogenase family. AstD subfamily.

It carries out the reaction N-succinyl-L-glutamate 5-semialdehyde + NAD(+) + H2O = N-succinyl-L-glutamate + NADH + 2 H(+). It participates in amino-acid degradation; L-arginine degradation via AST pathway; L-glutamate and succinate from L-arginine: step 4/5. Its function is as follows. Catalyzes the NAD-dependent reduction of succinylglutamate semialdehyde into succinylglutamate. This is N-succinylglutamate 5-semialdehyde dehydrogenase 1 from Caulobacter vibrioides (strain ATCC 19089 / CIP 103742 / CB 15) (Caulobacter crescentus).